A 403-amino-acid chain; its full sequence is Phosphoglycerate kinase (403 aa).

Substrate is bound by residues 21 to 23 (DFN), arginine 36, 59 to 62 (HLGR), arginine 119, and arginine 159. ATP-binding positions include lysine 214, glycine 301, glutamate 332, and 359–362 (GGDS).

Belongs to the phosphoglycerate kinase family. Monomer.

It is found in the cytoplasm. It carries out the reaction (2R)-3-phosphoglycerate + ATP = (2R)-3-phospho-glyceroyl phosphate + ADP. Its pathway is carbohydrate degradation; glycolysis; pyruvate from D-glyceraldehyde 3-phosphate: step 2/5. The protein is Phosphoglycerate kinase of Lactobacillus gasseri (strain ATCC 33323 / DSM 20243 / BCRC 14619 / CIP 102991 / JCM 1131 / KCTC 3163 / NCIMB 11718 / NCTC 13722 / AM63).